A 211-amino-acid polypeptide reads, in one-letter code: Endo-1,4-beta-xylanase 5 (211 aa).

An N-terminal signal peptide occupies residues 1–16 (MKVTAAFASLLLTAFA). Residues 19-210 (APEPVLVSRS…GVGSASVTIS (192 aa)) form the GH11 domain. Glu-106 functions as the Nucleophile in the catalytic mechanism. The active-site Proton donor is the Glu-197.

This sequence belongs to the glycosyl hydrolase 11 (cellulase G) family.

The protein resides in the secreted. It carries out the reaction Endohydrolysis of (1-&gt;4)-beta-D-xylosidic linkages in xylans.. Its pathway is glycan degradation; xylan degradation. Endo-1,4-beta-xylanase involved in the hydrolysis of xylan, a major structural heterogeneous polysaccharide found in plant biomass representing the second most abundant polysaccharide in the biosphere, after cellulose. The sequence is that of Endo-1,4-beta-xylanase 5 (XYN5) from Aspergillus niger.